The chain runs to 128 residues: Histone H2A (128 aa).

It belongs to the histone H2A family. In terms of assembly, the nucleosome is a histone octamer containing two molecules each of H2A, H2B, H3 and H4 assembled in one H3-H4 heterotetramer and two H2A-H2B heterodimers. The octamer wraps approximately 147 bp of DNA.

The protein resides in the nucleus. It is found in the chromosome. Core component of nucleosome. Nucleosomes wrap and compact DNA into chromatin, limiting DNA accessibility to the cellular machineries which require DNA as a template. Histones thereby play a central role in transcription regulation, DNA repair, DNA replication and chromosomal stability. DNA accessibility is regulated via a complex set of post-translational modifications of histones, also called histone code, and nucleosome remodeling. This is Histone H2A (HTA1) from Encephalitozoon cuniculi (strain GB-M1) (Microsporidian parasite).